The following is a 204-amino-acid chain: Putative 3-methyladenine DNA glycosylase (204 aa).

The protein belongs to the DNA glycosylase MPG family.

The polypeptide is Putative 3-methyladenine DNA glycosylase (Bacillus mycoides (strain KBAB4) (Bacillus weihenstephanensis)).